The primary structure comprises 147 residues: Probable inactive ribonuclease-like protein 12 (147 aa).

Residues Met1–Asp20 form the signal peptide.

The protein belongs to the pancreatic ribonuclease family.

The protein resides in the secreted. Functionally, does not exhibit any ribonuclease activity. The sequence is that of Probable inactive ribonuclease-like protein 12 (RNASE12) from Homo sapiens (Human).